The chain runs to 179 residues: Deoxyuridine 5'-triphosphate nucleotidohydrolase, mitochondrial (179 aa).

The transit peptide at Met1–Lys41 directs the protein to the mitochondrion. DUTP-binding positions include Arg97–Gly99, Gly111–Asp114, Gly122, Arg165, and Phe170–Gly171.

The protein belongs to the dUTPase family. In terms of assembly, homotrimer. Mg(2+) serves as cofactor.

Its subcellular location is the mitochondrion. It catalyses the reaction dUTP + H2O = dUMP + diphosphate + H(+). It participates in pyrimidine metabolism; dUMP biosynthesis; dUMP from dCTP (dUTP route): step 2/2. Its function is as follows. This enzyme is involved in nucleotide metabolism: it produces dUMP, the immediate precursor of thymidine nucleotides and it decreases the intracellular concentration of dUTP so that uracil cannot be incorporated into DNA. This chain is Deoxyuridine 5'-triphosphate nucleotidohydrolase, mitochondrial (dut), found in Dictyostelium discoideum (Social amoeba).